The chain runs to 475 residues: MSIKHWMSAPIAVATLFASQLLLAGSVLAAENNDRLDPRNDAFEQKHPDQYHSWKATSESKHIEDALSEDPNMVILWAGYGFAKDYNKARGHFYALDDVRQTLRTGAPADENSGPMPMACWSCKSPDVARVIEERGEDGYFSGKWARLGSEIVNPIGCSDCHDTRSEKFNQGEPELALTRPYVERAFDVIGKNFDDQSRLDKQASVCAQCHVEYYFTGPTKAVKFPWDMGTTVGDMEKYYDALDFKDWTHAVSKAPMLKAQHPGFETWREGIHGKNKVVCVDCHMPKVTKADGTVYTDHKVGNPFDRFEDTCAQCHTQTKEQLRNIVSSRKALVLNMKLTAEKQIVAAHFEAGEAWKAGATEEEMKPILQDIRHAQWRWDYAIASHGVHMHAPEVALEVLGTAVDRAADARTKLVRLLATKGITEPVQIPDISTKAKAQEALGMDMEKMNADKKHFLDTVVPDWDKAAAEREATY.

An N-terminal signal peptide occupies residues 1–29; sequence MSIKHWMSAPIAVATLFASQLLLAGSVLA. The tract at residues 38–57 is disordered; it reads PRNDAFEQKHPDQYHSWKAT. H92 serves as a coordination point for heme c. Residues C120, C123, and K124 each coordinate heme. Heme c contacts are provided by C158, C161, H162, C207, C210, and H211. Ca(2+) contacts are provided by E213, Y214, K259, and Q261. Y214 is a binding site for substrate. H262 contacts substrate. Heme c-binding residues include H273, C280, C283, H284, H299, C312, C315, H316, and H391.

This sequence belongs to the cytochrome c-552 family. Ca(2+) is required as a cofactor. It depends on heme c as a cofactor.

It is found in the periplasm. It carries out the reaction 6 Fe(III)-[cytochrome c] + NH4(+) + 2 H2O = 6 Fe(II)-[cytochrome c] + nitrite + 8 H(+). It functions in the pathway nitrogen metabolism; nitrate reduction (assimilation). Catalyzes the reduction of nitrite to ammonia, consuming six electrons in the process. The protein is Cytochrome c-552 of Vibrio parahaemolyticus serotype O3:K6 (strain RIMD 2210633).